The following is a 166-amino-acid chain: Putative protein PTGES3L (166 aa).

Positions 46–154 (RQHARTLWYD…RPPPAMDDLD (109 aa)) constitute a CS domain. Residues 142–166 (STKRPPPAMDDLDDDSDSADDATSN) are disordered. Over residues 151 to 166 (DDLDDDSDSADDATSN) the composition is skewed to acidic residues.

Belongs to the p23/wos2 family.

This Homo sapiens (Human) protein is Putative protein PTGES3L.